The sequence spans 1132 residues: MKKAGRPVGNKAASGGGKGDSVTAGNCAGKNTVKSPTSAPLSKVKSNDDLLAAMAGSSAGTNNSVAKGKKSTSTHSTSCGTNTNNPDTKTKTTSGPSGKRTTSMTSKESNSSRERLRNSRNSSSKKQSSTGASDRAQPKHSRALAQTSDSESRMSKSKSDGQLSDKVALEAKVKNLLGLAKSKDVEILQLRGELRDMRVQLGLPEEDEEEERPPEREAAAVITAADVESTLLLLQEQNQAIRGELNLLKNENRMLKDRLNALGFSLEQRLDGADKTFGFPSTSPELSSGGAGAHGDCATVASSVEGSAPGSMEDLLTGGQRSGSTDNLDSESSEVYQAVTSSDDALDAPSGCGSSSSSESEGGPPACRSSSRKGSSGNTSEVSVACLTERIHQMEENQHSTSEELQATLQELADLQQITQELNGENERLGEEKVLLMDSLCQQSDKLEHCGRQIEYFRSLLDEHGVAYSVDEDIKSGRYMELEQRYVELAENARFEREQLLGVQQHLSNTLKMAEQDNAEAQNVIAALKERNHHMERLLDVERQERASMAAVLEECKAAVNNDQAELSRCRVLLEQERQKVAELYSIHNAGDKSDIHQLLEGVRLDKEEAEAKASKLQDDLGHARSEVACLQDTLNKLDAEYRDFQSVVQKELAEQKRAIEKQREDLQEKETEIGDMKETIFELEDEVEQHRAVKLHDNLIISDLENSMKKLQDQKHDMEREIKILHRRLREESAEWRQFQADLQTAVVIANDIKSEAQEEIGDLRRRLQEAQEKNEKLGKEIEEVKNRKQDEERGRVYNYMNAVERDLAALRQGMGLSRRPSTSSEPSPTVKTLIKSFDSASQGPGANATAVAAAAAAAAAAAAVTVTSTTPTAPLPRTPLSPSPMKTPPAAAVSPIQRHSITGSMAAAKPLSSLADKRPSYTDISMPAEHLLRAANSRPASALQRVSNMDTSKTITVSRRSSEEPKRDISTPDGGPASSLISMSSAAALSSSSSPTASVNPTARSRLREERKDPLSALAREYGGSKRNALLRWCQKKTEGYQNIDITNFSSSWNDGLAFCAVLHTYLPAHIPYQELNSQDKRRNFTLAFQAAESVGIKSTLDITDMVHTERPDWQSVMTYVTSIYKYFET.

Positions 1–166 (MKKAGRPVGN…SKSDGQLSDK (166 aa)) are disordered. 2 stretches are compositionally biased toward low complexity: residues 73–109 (STHS…SKES) and 119–129 (SRNSSSKKQSS). Positions 150–159 (SESRMSKSKS) are enriched in basic and acidic residues. Positions 226–268 (DVESTLLLLQEQNQAIRGELNLLKNENRMLKDRLNALGFSLEQ) form a coiled coil. Residues 301-381 (ASSVEGSAPG…RKGSSGNTSE (81 aa)) are disordered. Residues 333 to 343 (SEVYQAVTSSD) are compositionally biased toward polar residues. Positions 348 to 377 (APSGCGSSSSSESEGGPPACRSSSRKGSSG) are enriched in low complexity. Coiled coils occupy residues 385-440 (ACLT…MDSL) and 478-798 (RYME…RGRV). Disordered stretches follow at residues 869–895 (TSTT…AAAV) and 939–1016 (SRPA…RKDP). Residues 875–889 (APLPRTPLSPSPMKT) are compositionally biased toward pro residues. Positions 946 to 961 (QRVSNMDTSKTITVSR) are enriched in polar residues. The segment covering 962–972 (RSSEEPKRDIS) has biased composition (basic and acidic residues). Over residues 979–1000 (ASSLISMSSAAALSSSSSPTAS) the composition is skewed to low complexity. Residues 1026-1131 (GSKRNALLRW…YVTSIYKYFE (106 aa)) form the Calponin-homology (CH) domain.

The protein belongs to the cytospin-A family. As to quaternary structure, may interact with both microtubules and actin cytoskeleton.

It is found in the cytoplasm. Its subcellular location is the cytoskeleton. The protein localises to the spindle. It localises to the cell junction. The protein resides in the gap junction. Involved in cytokinesis and spindle organization. May play a role in actin cytoskeleton organization and microtubule stabilization and hence required for proper cell adhesion and migration. This Danio rerio (Zebrafish) protein is Cytospin-A (specc1la).